The chain runs to 237 residues: Bax inhibitor 1 (237 aa).

The Cytoplasmic segment spans residues 1–29 (MNIFDRKINFDALLKFSHITPSTQQHLKK). A Glycyl lysine isopeptide (Lys-Gly) (interchain with G-Cter in ubiquitin) cross-link involves residue Lys7. The chain crosses the membrane as a helical span at residues 30-50 (VYASFALCMFVAAAGAYVHVV). Residues 51-52 (TH) are Lumenal-facing. Residues 53–73 (FIQAGLLSALGSLALMIWLMA) traverse the membrane as a helical segment. Topologically, residues 74-86 (TPHSHETEQKRLG) are cytoplasmic. The chain crosses the membrane as a helical span at residues 87–107 (LLAGFAFLTGVGLGPALELCI). Residues 108-112 (AVNPS) are Lumenal-facing. A helical transmembrane segment spans residues 113–133 (ILPTAFMGTAMIFTCFSLSAL). The Cytoplasmic segment spans residues 134–139 (YARRRS). A helical transmembrane segment spans residues 140-160 (YLFLGGILMSAMSLMLLSSLG). The Lumenal segment spans residues 161 to 166 (NLFFGS). A helical transmembrane segment spans residues 167–187 (IWLFQANLYLGLLVMCGFVLF). Residues 188–206 (DTQLIIEKAEHGDKDYIWH) lie on the Cytoplasmic side of the membrane. The segment at residues 207 to 227 (CVDLFLDFVTLFRKLMLILAF) is an intramembrane region (helical). The Cytoplasmic segment spans residues 228–237 (NEKDKKKEKK).

Belongs to the BI1 family. In terms of assembly, interacts with BCL2. Interacts with BCL2L1. Interacts with ERN1. Post-translationally, ubiquitinated by BFAR, leading to proteasomal degradation. Highly abundant in adult testis.

It localises to the endoplasmic reticulum membrane. Endoplasmic reticulum (ER)-resident protein that confers cellular protection as an anti-apoptotic protein by limiting multiple stress-inducing pathways surrounding the endoplasmic reticulum and mitochondria. Inhibits the activities of the key sensor for the endoplasmic reticulum unfolded protein response IRE1alpha/ERN1 both directly and by blocking BAX/BAK binding. Modulates ER calcium homeostasis by acting as a calcium-leak channel. Negatively regulates autophagy and autophagosome formation, especially during periods of nutrient deprivation, and reduces cell survival during starvation. The chain is Bax inhibitor 1 (Tmbim6) from Mus musculus (Mouse).